A 1392-amino-acid chain; its full sequence is Leucine-rich PPR motif-containing protein, mitochondrial (1392 aa).

A mitochondrion-targeting transit peptide spans 1-77 (MSALLRPARW…LPEEPAPVRR (77 aa)). PPR repeat units lie at residues 125 to 159 (LLRS…GTVY), 160 to 194 (DVSH…NIQP), 195 to 229 (NRVT…DLPI), 230 to 264 (TEAV…GIEP), 265 to 299 (GPDT…DHYF), 300 to 334 (MDRD…RRSI), 402 to 436 (HSSS…GFPI), 437 to 471 (RTHY…GVDP), 677 to 708 (VGDP…ESDM), 709 to 745 (VIGG…SAVL), 746 to 783 (DTAK…IKDA), 784 to 820 (AVLS…AKPS), 821 to 856 (SNIS…VLPR), and 953 to 987 (RDQM…NLIP). N6-acetyllysine is present on residues Lys151 and Lys186. Lys291 bears the N6-acetyllysine mark. An N6-acetyllysine modification is found at Lys462. At Lys749 the chain carries N6-acetyllysine. Ser1025, Ser1026, and Ser1028 each carry phosphoserine. 6 PPR repeats span residues 1030 to 1064 (GDTV…DVVF), 1065 to 1101 (SSEA…GFTL), 1102 to 1136 (NGAA…EQVP), 1137 to 1173 (SELA…IELS), 1174 to 1208 (RMVF…ENQT), and 1315 to 1349 (NDRV…NMKL). Ser1137 is subject to Phosphoserine.

In terms of assembly, component of mRNP complexes associated with HNRPA1. Component of the complex, at least composed of LRPPRC, BECN1 and BCL2; the interactions prevent BECN1 from forming an autophagy-inducing complex with PIK3C3. Interacts with CECR2, HEBP2, MAP1S, UXT, PPARGC1A and FOXO1. Interacts (via N-terminus) with EIF4E; the interaction promotes association of EIF4E with 4ESE-containing mRNAs. Interacts with exportin XPO1/CRM1; interacts both alone and in complex with EIF4E and 4ESE-containing mRNAs to form an EIF4E-dependent mRNA export complex. Interacts with importin IPO8; the interaction occurs when LRPPRC is in its RNA-free form and returns LRPPRC to the nucleus for further export rounds. Interacts with BECN1. In terms of tissue distribution, widely expressed. Expressed in liver, brain and a subset of small diameter sensory neurons in the dorsal root ganglion (at protein level).

Its subcellular location is the mitochondrion. It is found in the nucleus. The protein localises to the nucleoplasm. It localises to the nucleus inner membrane. The protein resides in the nucleus outer membrane. May play a role in RNA metabolism in both nuclei and mitochondria. In the nucleus binds to HNRPA1-associated poly(A) mRNAs and is part of nmRNP complexes at late stages of mRNA maturation which are possibly associated with nuclear mRNA export. Positively modulates nuclear export of mRNAs containing the EIF4E sensitivity element (4ESE) by binding simultaneously to both EIF4E and the 4ESE and acting as a platform for assembly for the RNA export complex. Also binds to exportin XPO1/CRM1 to engage the nuclear pore and traffic the bound mRNAs to the cytoplasm. May bind mature mRNA in the nucleus outer membrane. In mitochondria binds to poly(A) mRNA. Plays a role in translation or stability of mitochondrially encoded cytochrome c oxidase (COX) subunits. May be involved in transcription regulation. Cooperates with PPARGC1A to regulate certain mitochondrially encoded genes and gluconeogenic genes and may regulate docking of PPARGC1A to transcription factors. Seems to be involved in the transcription regulation of the multidrug-related genes MDR1 and MVP. Part of a nuclear factor that binds to the invMED1 element of MDR1 and MVP gene promoters. Binds single-stranded DNA. Required for maintaining mitochondrial potential. Suppresses the initiation of basal levels of autophagy and mitophagy by sustaining BCL2 levels. The chain is Leucine-rich PPR motif-containing protein, mitochondrial (Lrpprc) from Rattus norvegicus (Rat).